The chain runs to 345 residues: Uroporphyrinogen decarboxylase (345 aa).

Substrate is bound by residues 27-31, Phe-46, Asp-76, Tyr-152, Ser-207, and His-321; that span reads RQAGR.

It belongs to the uroporphyrinogen decarboxylase family. In terms of assembly, homodimer.

The protein resides in the cytoplasm. It catalyses the reaction uroporphyrinogen III + 4 H(+) = coproporphyrinogen III + 4 CO2. It participates in porphyrin-containing compound metabolism; protoporphyrin-IX biosynthesis; coproporphyrinogen-III from 5-aminolevulinate: step 4/4. In terms of biological role, catalyzes the decarboxylation of four acetate groups of uroporphyrinogen-III to yield coproporphyrinogen-III. This chain is Uroporphyrinogen decarboxylase, found in Staphylococcus aureus (strain Mu3 / ATCC 700698).